The chain runs to 109 residues: T cell receptor alpha variable 26-1 (109 aa).

The first 19 residues, 1–19, serve as a signal peptide directing secretion; sequence MRLVARVTVFLTFGTIIDA. Residues 20 to 109 enclose the Ig-like domain; it reads KTTQPTSMDC…TAVYYCIVRV (90 aa). Cys39 and Cys105 are joined by a disulfide. Residues Asn40 and Asn71 are each glycosylated (N-linked (GlcNAc...) asparagine).

In terms of assembly, alpha-beta TR is a heterodimer composed of an alpha and beta chain; disulfide-linked. The alpha-beta TR is associated with the transmembrane signaling CD3 coreceptor proteins to form the TR-CD3 (TcR or TCR). The assembly of alpha-beta TR heterodimers with CD3 occurs in the endoplasmic reticulum where a single alpha-beta TR heterodimer associates with one CD3D-CD3E heterodimer, one CD3G-CD3E heterodimer and one CD247 homodimer forming a stable octameric structure. CD3D-CD3E and CD3G-CD3E heterodimers preferentially associate with TR alpha and TR beta chains, respectively. The association of the CD247 homodimer is the last step of TcR assembly in the endoplasmic reticulum and is required for transport to the cell surface.

The protein resides in the cell membrane. Its function is as follows. V region of the variable domain of T cell receptor (TR) alpha chain that participates in the antigen recognition. Alpha-beta T cell receptors are antigen specific receptors which are essential to the immune response and are present on the cell surface of T lymphocytes. Recognize peptide-major histocompatibility (MH) (pMH) complexes that are displayed by antigen presenting cells (APC), a prerequisite for efficient T cell adaptive immunity against pathogens. Binding of alpha-beta TR to pMH complex initiates TR-CD3 clustering on the cell surface and intracellular activation of LCK that phosphorylates the ITAM motifs of CD3G, CD3D, CD3E and CD247 enabling the recruitment of ZAP70. In turn ZAP70 phosphorylates LAT, which recruits numerous signaling molecules to form the LAT signalosome. The LAT signalosome propagates signal branching to three major signaling pathways, the calcium, the mitogen-activated protein kinase (MAPK) kinase and the nuclear factor NF-kappa-B (NF-kB) pathways, leading to the mobilization of transcription factors that are critical for gene expression and essential for T cell growth and differentiation. The T cell repertoire is generated in the thymus, by V-(D)-J rearrangement. This repertoire is then shaped by intrathymic selection events to generate a peripheral T cell pool of self-MH restricted, non-autoaggressive T cells. Post-thymic interaction of alpha-beta TR with the pMH complexes shapes TR structural and functional avidity. The sequence is that of T cell receptor alpha variable 26-1 from Homo sapiens (Human).